The sequence spans 509 residues: Photosystem II CP47 reaction center protein (509 aa).

The next 6 helical transmembrane spans lie at 21–36 (AVHM…WAGS), 101–115 (IVFS…IWHW), 140–156 (GIHL…FGAF), 203–218 (IAAG…FHLS), 237–253 (VLSS…AFVV), and 458–473 (SFAL…HGSR).

This sequence belongs to the PsbB/PsbC family. PsbB subfamily. As to quaternary structure, PSII is composed of 1 copy each of membrane proteins PsbA, PsbB, PsbC, PsbD, PsbE, PsbF, PsbH, PsbI, PsbJ, PsbK, PsbL, PsbM, PsbT, PsbX, PsbY, PsbZ, Psb30/Ycf12, at least 3 peripheral proteins of the oxygen-evolving complex and a large number of cofactors. It forms dimeric complexes. It depends on Binds multiple chlorophylls. PSII binds additional chlorophylls, carotenoids and specific lipids. as a cofactor.

Its subcellular location is the plastid. The protein localises to the chloroplast thylakoid membrane. Functionally, one of the components of the core complex of photosystem II (PSII). It binds chlorophyll and helps catalyze the primary light-induced photochemical processes of PSII. PSII is a light-driven water:plastoquinone oxidoreductase, using light energy to abstract electrons from H(2)O, generating O(2) and a proton gradient subsequently used for ATP formation. This is Photosystem II CP47 reaction center protein from Populus deltoides (Eastern poplar).